We begin with the raw amino-acid sequence, 110 residues long: Large ribosomal subunit protein uL22 (110 aa).

This sequence belongs to the universal ribosomal protein uL22 family. Part of the 50S ribosomal subunit.

Functionally, this protein binds specifically to 23S rRNA; its binding is stimulated by other ribosomal proteins, e.g. L4, L17, and L20. It is important during the early stages of 50S assembly. It makes multiple contacts with different domains of the 23S rRNA in the assembled 50S subunit and ribosome. In terms of biological role, the globular domain of the protein is located near the polypeptide exit tunnel on the outside of the subunit, while an extended beta-hairpin is found that lines the wall of the exit tunnel in the center of the 70S ribosome. This Maridesulfovibrio salexigens (strain ATCC 14822 / DSM 2638 / NCIMB 8403 / VKM B-1763) (Desulfovibrio salexigens) protein is Large ribosomal subunit protein uL22.